A 506-amino-acid polypeptide reads, in one-letter code: Cytochrome P450 monooxygenase atr2 (506 aa).

Residues 18–38 form a helical membrane-spanning segment; that stretch reads VFAGLVLASLLTTTYCIWNIF. Cys-451 is a binding site for heme.

This sequence belongs to the cytochrome P450 family. It depends on heme as a cofactor.

It is found in the membrane. The enzyme catalyses 4-O-demethylbarbatate + reduced [NADPH--hemoprotein reductase] + O2 = proatranorin II + oxidized [NADPH--hemoprotein reductase] + H2O + H(+). The catalysed reaction is proatranorin II + reduced [NADPH--hemoprotein reductase] + O2 = proatranorin III + oxidized [NADPH--hemoprotein reductase] + 2 H2O + H(+). It catalyses the reaction proatranorin I + reduced [NADPH--hemoprotein reductase] + O2 = proatranorin IV + oxidized [NADPH--hemoprotein reductase] + H2O + H(+). It carries out the reaction proatranorin IV + reduced [NADPH--hemoprotein reductase] + O2 = atranorin + oxidized [NADPH--hemoprotein reductase] + 2 H2O + H(+). It participates in secondary metabolite biosynthesis; terpenoid biosynthesis. Functionally, cytochrome P450 monooxygenase; part of the gene cluster that mediates the biosynthesis of atranorin, a depside of polyketide origin that accumulates in the cortical or medullary layers of lichen thalli. Atr2 performs the oxidation at the C-9 position of 4-O-demethylbarbatic acid to yield proatranorin III via proatranorin II. Atr2 is also able to oxidize the atr3 product proatranorin I to produce the final compound atranorin. The first step in the pathway is performed by the non-reducing polyketide synthase atr1 that produces 4-O-demethylbarbatic acid composed of two 3-methylorsellinic acid (3MOA) moieties. The pathway continues with the actions of the cytochrome P450 monooygenase atr2 that catalizes the oxidation of c-9 and the O-methyltransferase atr3 that performs the methylation of the carboxyl group to yield atranorin, via the proatranorin II and III intermediates if atr2 acts first, or the proatranorin I intermediate if atr3 acts first. This is Cytochrome P450 monooxygenase atr2 from Stereocaulon alpinum (Alpine snow lichen).